The sequence spans 620 residues: Probable potassium transport system protein Kup (620 aa).

Transmembrane regions (helical) follow at residues 8–28 (VGLL…SPLY), 50–70 (VLSL…VILI), 102–122 (MLLG…TPAI), 136–156 (PDLK…LFAI), 168–188 (FGPV…ANIV), 211–231 (LMSF…EALY), 246–266 (WFSL…ALLI), 284–304 (MVMP…QAVI), 336–356 (IYVP…VIGF), 368–388 (IAVT…MALL), 393–413 (MALV…YFAA), and 415–435 (IIKV…SFTV).

The protein belongs to the HAK/KUP transporter (TC 2.A.72) family.

The protein localises to the cell inner membrane. It catalyses the reaction K(+)(in) + H(+)(in) = K(+)(out) + H(+)(out). Functionally, transport of potassium into the cell. Likely operates as a K(+):H(+) symporter. This Rhodopseudomonas palustris (strain HaA2) protein is Probable potassium transport system protein Kup.